The following is an 80-amino-acid chain: UPF0270 protein AHA_0994 (80 aa).

The protein belongs to the UPF0270 family.

The sequence is that of UPF0270 protein AHA_0994 from Aeromonas hydrophila subsp. hydrophila (strain ATCC 7966 / DSM 30187 / BCRC 13018 / CCUG 14551 / JCM 1027 / KCTC 2358 / NCIMB 9240 / NCTC 8049).